The primary structure comprises 292 residues: 4-diphosphocytidyl-2-C-methyl-D-erythritol kinase (292 aa).

Residue Lys-10 is part of the active site. 94 to 104 (PVAAGLAGGSS) provides a ligand contact to ATP. Asp-136 is a catalytic residue.

It belongs to the GHMP kinase family. IspE subfamily.

It catalyses the reaction 4-CDP-2-C-methyl-D-erythritol + ATP = 4-CDP-2-C-methyl-D-erythritol 2-phosphate + ADP + H(+). It participates in isoprenoid biosynthesis; isopentenyl diphosphate biosynthesis via DXP pathway; isopentenyl diphosphate from 1-deoxy-D-xylulose 5-phosphate: step 3/6. Its function is as follows. Catalyzes the phosphorylation of the position 2 hydroxy group of 4-diphosphocytidyl-2C-methyl-D-erythritol. This is 4-diphosphocytidyl-2-C-methyl-D-erythritol kinase from Brevibacillus brevis (strain 47 / JCM 6285 / NBRC 100599).